A 218-amino-acid chain; its full sequence is Methylthioribulose-1-phosphate dehydratase (218 aa).

Residues H107 and H109 each contribute to the Zn(2+) site.

The protein belongs to the aldolase class II family. MtnB subfamily. Zn(2+) is required as a cofactor.

The enzyme catalyses 5-(methylsulfanyl)-D-ribulose 1-phosphate = 5-methylsulfanyl-2,3-dioxopentyl phosphate + H2O. Its pathway is amino-acid biosynthesis; L-methionine biosynthesis via salvage pathway; L-methionine from S-methyl-5-thio-alpha-D-ribose 1-phosphate: step 2/6. Catalyzes the dehydration of methylthioribulose-1-phosphate (MTRu-1-P) into 2,3-diketo-5-methylthiopentyl-1-phosphate (DK-MTP-1-P). The protein is Methylthioribulose-1-phosphate dehydratase of Xylella fastidiosa (strain M12).